The chain runs to 155 residues: U4/U6.U5 small nuclear ribonucleoprotein 27 kDa protein (155 aa).

2 stretches are compositionally biased toward basic residues: residues 1–31 (MGRS…RERS) and 39–59 (RRSR…RHRS). The interval 1 to 97 (MGRSRSRSPR…ITEEDLEGKT (97 aa)) is disordered. Phosphoserine is present on residues S61 and S65. The segment covering 66–97 (RLKERRDEEKKETKETKSKERQITEEDLEGKT) has biased composition (basic and acidic residues). Residues S111, S114, and S132 each carry the phosphoserine modification.

It belongs to the SNUT3 family. In terms of assembly, part of a tri-snRNP complex. Phosphorylated in vitro by snRNP-associated protein kinase.

The protein resides in the nucleus. Functionally, may play a role in mRNA splicing. The polypeptide is U4/U6.U5 small nuclear ribonucleoprotein 27 kDa protein (SNRNP27) (Homo sapiens (Human)).